A 141-amino-acid polypeptide reads, in one-letter code: Superoxide dismutase [Cu-Zn], chloroplastic (141 aa).

Positions 33, 35, and 50 each coordinate Cu cation. Residues C44 and C133 are joined by a disulfide bond. Zn(2+) is bound by residues H50, H58, H67, and D70. H107 serves as a coordination point for Cu cation.

The protein belongs to the Cu-Zn superoxide dismutase family. Homotetramer. Requires Cu cation as cofactor. Zn(2+) is required as a cofactor.

Its subcellular location is the plastid. It localises to the chloroplast. The enzyme catalyses 2 superoxide + 2 H(+) = H2O2 + O2. Functionally, destroys radicals which are normally produced within the cells and which are toxic to biological systems. This is Superoxide dismutase [Cu-Zn], chloroplastic (SODCP) from Pinus sylvestris (Scotch pine).